Here is a 426-residue protein sequence, read N- to C-terminus: 3-phosphoshikimate 1-carboxyvinyltransferase (426 aa).

The 3-phosphoshikimate site is built by Lys-23, Ser-24, and Arg-28. Position 23 (Lys-23) interacts with phosphoenolpyruvate. Phosphoenolpyruvate contacts are provided by Gly-96 and Arg-124. Residues Thr-170, Ser-171, Gln-172, Ser-198, Asp-314, and Lys-341 each contribute to the 3-phosphoshikimate site. Position 172 (Gln-172) interacts with phosphoenolpyruvate. The Proton acceptor role is filled by Asp-314. The phosphoenolpyruvate site is built by Arg-345, Arg-386, and Lys-411.

Belongs to the EPSP synthase family. Monomer.

It is found in the cytoplasm. The catalysed reaction is 3-phosphoshikimate + phosphoenolpyruvate = 5-O-(1-carboxyvinyl)-3-phosphoshikimate + phosphate. It functions in the pathway metabolic intermediate biosynthesis; chorismate biosynthesis; chorismate from D-erythrose 4-phosphate and phosphoenolpyruvate: step 6/7. Its function is as follows. Catalyzes the transfer of the enolpyruvyl moiety of phosphoenolpyruvate (PEP) to the 5-hydroxyl of shikimate-3-phosphate (S3P) to produce enolpyruvyl shikimate-3-phosphate and inorganic phosphate. The chain is 3-phosphoshikimate 1-carboxyvinyltransferase from Trichormus variabilis (strain ATCC 29413 / PCC 7937) (Anabaena variabilis).